A 724-amino-acid polypeptide reads, in one-letter code: Propionyl-CoA carboxylase alpha chain, mitochondrial (724 aa).

The N-terminal 48 residues, 1 to 48 (MAGQWVRTVALLAARRHWRRSSQQQLLGTLKHAPVYSYQCLVVSRSLS), are a transit peptide targeting the mitochondrion. Positions 58-505 (TFDKILIANR…STKFLSDVYP (448 aa)) constitute a Biotin carboxylation domain. At Lys-61 the chain carries N6-acetyllysine; alternate. Lys-61 carries the post-translational modification N6-succinyllysine; alternate. At Lys-115 the chain carries N6-succinyllysine. An N6-acetyllysine; alternate modification is found at Lys-146. Position 146 is an N6-succinyllysine; alternate (Lys-146). N6-acetyllysine is present on Lys-150. Lys-173 serves as a coordination point for ATP. The ATP-grasp domain occupies 177-374 (KLLAKRAKVN…LVQEMILVAK (198 aa)). Lys-184 is modified (N6-succinyllysine). An N6-acetyllysine; alternate modification is found at Lys-196. The residue at position 196 (Lys-196) is an N6-succinyllysine; alternate. ATP-binding positions include 205 to 266 (AREI…PRHI), Glu-257, and Asn-292. Ser-248 is modified (phosphoserine). Lys-258 is subject to N6-succinyllysine. The residue at position 324 (Lys-324) is an N6-acetyllysine; alternate. Lys-324 carries the post-translational modification N6-succinyllysine; alternate. The Mg(2+) site is built by Glu-332, Glu-345, and Asn-347. Mn(2+) contacts are provided by Glu-332, Glu-345, and Asn-347. Residue Arg-349 is part of the active site. N6-succinyllysine occurs at positions 381 and 403. Biotin is bound at residue Phe-405. Lys-492 carries the N6-acetyllysine modification. N6-succinyllysine is present on residues Lys-498, Lys-509, Lys-554, and Lys-644. Residues 645–724 (FMLEKVPKDT…GEGDLLVELE (80 aa)) enclose the Biotinyl-binding domain. Lys-690 is subject to N6-biotinyllysine; by HLCS.

In terms of assembly, the holoenzyme is a dodecamer composed of 6 PCCA/alpha subunits and 6 PCCB/beta subunits. Interacts (via the biotin carboxylation domain) with SIRT4. Interacts with SIRT3 and SIRT5. The cofactor is Mg(2+). Mn(2+) is required as a cofactor. It depends on biotin as a cofactor. Acetylated. In terms of processing, the biotin cofactor is covalently attached to the C-terminal biotinyl-binding domain and is required for the catalytic activity. Biotinylation is catalyzed by HLCS.

It localises to the mitochondrion matrix. The enzyme catalyses propanoyl-CoA + hydrogencarbonate + ATP = (S)-methylmalonyl-CoA + ADP + phosphate + H(+). It catalyses the reaction butanoyl-CoA + hydrogencarbonate + ATP = (2S)-ethylmalonyl-CoA + ADP + phosphate + H(+). It participates in metabolic intermediate metabolism; propanoyl-CoA degradation; succinyl-CoA from propanoyl-CoA: step 1/3. Functionally, this is one of the 2 subunits of the biotin-dependent propionyl-CoA carboxylase (PCC), a mitochondrial enzyme involved in the catabolism of odd chain fatty acids, branched-chain amino acids isoleucine, threonine, methionine, and valine and other metabolites. Propionyl-CoA carboxylase catalyzes the carboxylation of propionyl-CoA/propanoyl-CoA to D-methylmalonyl-CoA/(S)-methylmalonyl-CoA. Within the holoenzyme, the alpha subunit catalyzes the ATP-dependent carboxylation of the biotin carried by the biotin carboxyl carrier (BCC) domain, while the beta subunit then transfers the carboxyl group from carboxylated biotin to propionyl-CoA. Propionyl-CoA carboxylase also significantly acts on butyryl-CoA/butanoyl-CoA, which is converted to ethylmalonyl-CoA/(2S)-ethylmalonyl-CoA. Other alternative minor substrates include (2E)-butenoyl-CoA/crotonoyl-CoA. In Mus musculus (Mouse), this protein is Propionyl-CoA carboxylase alpha chain, mitochondrial.